A 276-amino-acid chain; its full sequence is Formamidopyrimidine-DNA glycosylase (276 aa).

Catalysis depends on Pro2, which acts as the Schiff-base intermediate with DNA. The active-site Proton donor is the Glu3. Lys58 acts as the Proton donor; for beta-elimination activity in catalysis. DNA contacts are provided by His94, Arg112, and Arg157. The segment at 242–276 (FVYDRAGEPCRVCGAPIRQIVQGQRSTYYCPNCQR) adopts an FPG-type zinc-finger fold. The active-site Proton donor; for delta-elimination activity is the Arg266.

The protein belongs to the FPG family. Monomer. Zn(2+) serves as cofactor.

It carries out the reaction Hydrolysis of DNA containing ring-opened 7-methylguanine residues, releasing 2,6-diamino-4-hydroxy-5-(N-methyl)formamidopyrimidine.. The enzyme catalyses 2'-deoxyribonucleotide-(2'-deoxyribose 5'-phosphate)-2'-deoxyribonucleotide-DNA = a 3'-end 2'-deoxyribonucleotide-(2,3-dehydro-2,3-deoxyribose 5'-phosphate)-DNA + a 5'-end 5'-phospho-2'-deoxyribonucleoside-DNA + H(+). Involved in base excision repair of DNA damaged by oxidation or by mutagenic agents. Acts as a DNA glycosylase that recognizes and removes damaged bases. Has a preference for oxidized purines, such as 7,8-dihydro-8-oxoguanine (8-oxoG). Has AP (apurinic/apyrimidinic) lyase activity and introduces nicks in the DNA strand. Cleaves the DNA backbone by beta-delta elimination to generate a single-strand break at the site of the removed base with both 3'- and 5'-phosphates. This is Formamidopyrimidine-DNA glycosylase from Burkholderia thailandensis (strain ATCC 700388 / DSM 13276 / CCUG 48851 / CIP 106301 / E264).